A 68-amino-acid chain; its full sequence is UPF0253 protein ASA_2184 (68 aa).

This sequence belongs to the UPF0253 family.

The sequence is that of UPF0253 protein ASA_2184 from Aeromonas salmonicida (strain A449).